Consider the following 91-residue polypeptide: Small ribosomal subunit protein uS19 (91 aa).

This sequence belongs to the universal ribosomal protein uS19 family.

Its function is as follows. Protein S19 forms a complex with S13 that binds strongly to the 16S ribosomal RNA. This is Small ribosomal subunit protein uS19 from Marinomonas sp. (strain MWYL1).